A 627-amino-acid chain; its full sequence is Serine/threonine-protein phosphatase 2A 56 kDa regulatory subunit delta 2 isoform (627 aa).

The tract at residues 1 to 37 is disordered; it reads MKGLRSKFVKALSLKDEQGSHKNGHSKSHYISKNGSY.

The protein belongs to the phosphatase 2A regulatory subunit B family. PP2A consists of a common heterodimeric core enzyme, composed of a 36 kDa catalytic subunit (subunit C) and a 65 kDa constant regulatory subunit (PR65 or subunit A), that associates with a variety of regulatory subunits. Proteins that associate with the core dimer include three families of regulatory subunits B (the R2/B/PR55/B55, R3/B''/PR72/PR130/PR59 and R5/B'/B56 families), the 48 kDa variable regulatory subunit, viral proteins, and cell signaling molecules.

The protein resides in the cytoplasm. It is found in the cell tip. Its function is as follows. The B regulatory subunit might modulate substrate selectivity and catalytic activity, and might also direct the localization of the catalytic enzyme to a particular subcellular compartment. Has a role in cell shape control and septum formation. This is Serine/threonine-protein phosphatase 2A 56 kDa regulatory subunit delta 2 isoform (par2) from Schizosaccharomyces pombe (strain 972 / ATCC 24843) (Fission yeast).